A 221-amino-acid polypeptide reads, in one-letter code: 3-dehydroquinate dehydratase (221 aa).

3-dehydroquinate is bound by residues 33–35 (EIR) and R63. H118 (proton donor/acceptor) is an active-site residue. The Schiff-base intermediate with substrate role is filled by K144. 3-dehydroquinate contacts are provided by R181, T200, and Q204.

Belongs to the type-I 3-dehydroquinase family. As to quaternary structure, homodimer.

The catalysed reaction is 3-dehydroquinate = 3-dehydroshikimate + H2O. It participates in metabolic intermediate biosynthesis; chorismate biosynthesis; chorismate from D-erythrose 4-phosphate and phosphoenolpyruvate: step 3/7. Its function is as follows. Involved in the third step of the chorismate pathway, which leads to the biosynthesis of aromatic amino acids. Catalyzes the cis-dehydration of 3-dehydroquinate (DHQ) and introduces the first double bond of the aromatic ring to yield 3-dehydroshikimate. This is 3-dehydroquinate dehydratase from Methanothermobacter thermautotrophicus (strain ATCC 29096 / DSM 1053 / JCM 10044 / NBRC 100330 / Delta H) (Methanobacterium thermoautotrophicum).